The sequence spans 558 residues: 2-isopropylmalate synthase (558 aa).

The region spanning 30-303 (PIWCSVDLRD…DPKLDCSDIE (274 aa)) is the Pyruvate carboxyltransferase domain. The Mg(2+) site is built by aspartate 39, histidine 242, histidine 244, and asparagine 278. Positions 437–558 (QPGARIKFVD…ANRVLDVVGK (122 aa)) are regulatory domain.

It belongs to the alpha-IPM synthase/homocitrate synthase family. LeuA type 2 subfamily. In terms of assembly, homodimer. Mg(2+) serves as cofactor.

The protein localises to the cytoplasm. It carries out the reaction 3-methyl-2-oxobutanoate + acetyl-CoA + H2O = (2S)-2-isopropylmalate + CoA + H(+). Its pathway is amino-acid biosynthesis; L-leucine biosynthesis; L-leucine from 3-methyl-2-oxobutanoate: step 1/4. Its function is as follows. Catalyzes the condensation of the acetyl group of acetyl-CoA with 3-methyl-2-oxobutanoate (2-ketoisovalerate) to form 3-carboxy-3-hydroxy-4-methylpentanoate (2-isopropylmalate). In Rhizobium meliloti (strain 1021) (Ensifer meliloti), this protein is 2-isopropylmalate synthase.